The sequence spans 387 residues: Putative transposase y4pF/y4sB (387 aa).

This sequence belongs to the transposase 20 family.

This chain is Putative transposase y4pF/y4sB, found in Sinorhizobium fredii (strain NBRC 101917 / NGR234).